The primary structure comprises 262 residues: Ornithine carbamoyltransferase (262 aa).

Carbamoyl phosphate contacts are provided by residues 3-7, Q30, R54, and 81-84; these read STRTR and HPTQ. L-ornithine contacts are provided by residues N114, D178, and 182-183; that span reads SM. Residues 219–222 and T247 each bind carbamoyl phosphate; that span reads HCLP.

Belongs to the aspartate/ornithine carbamoyltransferase superfamily. OTCase family.

The protein resides in the cytoplasm. It carries out the reaction carbamoyl phosphate + L-ornithine = L-citrulline + phosphate + H(+). It functions in the pathway amino-acid biosynthesis; L-arginine biosynthesis; L-arginine from L-ornithine and carbamoyl phosphate: step 1/3. Functionally, reversibly catalyzes the transfer of the carbamoyl group from carbamoyl phosphate (CP) to the N(epsilon) atom of ornithine (ORN) to produce L-citrulline. The protein is Ornithine carbamoyltransferase (argF) of Neisseria polysaccharea.